Reading from the N-terminus, the 244-residue chain is Tetraspanin-1 (244 aa).

Transmembrane regions (helical) follow at residues 11–31 (VLFFLDLAMLLAALALIAVGF), 67–87 (LIVVFWSIIGLSLGAVVTAVL), 104–124 (YLVLIIVLVSLEIGCGVAVLV), and 198–218 (ILLVILILQTIAIILPVPILI).

This sequence belongs to the tetraspanin (TM4SF) family.

The protein resides in the membrane. The chain is Tetraspanin-1 (tsp-1) from Caenorhabditis elegans.